Consider the following 663-residue polypeptide: Bicarbonate transport ATP-binding protein CmpC (663 aa).

The region spanning 5–239 (VAVENIEKSF…RPRKRMDVVH (235 aa)) is the ABC transporter domain. 42–49 (GHSGCGKS) lines the ATP pocket. Positions 281–663 (LEIGYVPLMA…LDQPRPIAAA (383 aa)) are cmpA-like.

The protein belongs to the ABC transporter superfamily. Nitrate/nitrite/cyanate uptake transporter (NitT) (TC 3.A.1.16) family. As to quaternary structure, the complex is composed of two ATP-binding proteins (CmpC and CmpD), a transmembrane protein (CmpB) and a solute-binding protein (CmpA).

The protein resides in the cell inner membrane. Functionally, part of the ABC transporter complex CmpABCD involved in bicarbonate transport. Responsible for energy coupling to the transport system. In Synechococcus elongatus (strain ATCC 33912 / PCC 7942 / FACHB-805) (Anacystis nidulans R2), this protein is Bicarbonate transport ATP-binding protein CmpC (cmpC).